The following is a 626-amino-acid chain: Leucine aminopeptidase 2-1 (626 aa).

Substrate contacts are provided by residues 134–136 (QCQ) and 259–264 (PYGGME). Histidine 288 provides a ligand contact to Zn(2+). The active-site Proton acceptor is glutamate 289. Residues histidine 292 and glutamate 311 each coordinate Zn(2+). Residue tyrosine 389 is the Proton donor of the active site.

The protein belongs to the peptidase M1 family. Zn(2+) serves as cofactor.

It is found in the cytoplasm. Its subcellular location is the nucleus. The catalysed reaction is an epoxide + H2O = an ethanediol. In terms of biological role, aminopeptidase that preferentially cleaves di- and tripeptides. Also has low epoxide hydrolase activity (in vitro). Can hydrolyze the epoxide leukotriene LTA(4) but it forms preferentially 5,6-dihydroxy-7,9,11,14-eicosatetraenoic acid rather than the cytokine leukotriene B(4) as the product compared to the homologous mammalian enzyme (in vitro). This Scheffersomyces stipitis (strain ATCC 58785 / CBS 6054 / NBRC 10063 / NRRL Y-11545) (Yeast) protein is Leucine aminopeptidase 2-1 (LKA4).